Here is a 555-residue protein sequence, read N- to C-terminus: Galectin-3-binding protein (555 aa).

The N-terminal stretch at 1–18 is a signal peptide; that stretch reads MAPLRLFWIWLLVVGTRG. An SRCR domain is found at 24-124; that stretch reads MRLADGGSAN…HDKDASVICT (101 aa). 3 cysteine pairs are disulfide-bonded: C49/C113, C62/C123, and C93/C103. N-linked (GlcNAc...) asparagine glycosylation occurs at N69. N125 carries N-linked (GlcNAc...) asparagine glycosylation. The BTB domain maps to 153–221; that stretch reads CDLFITVKVR…LYSRRIDVSL (69 aa). The BACK domain maps to 260–360; the sequence is PLELYAYALA…MPPQDLFSLQ (101 aa). 3 N-linked (GlcNAc...) asparagine glycosylation sites follow: N362, N398, and N550.

Homodimers and homomultimers. The multimers form ring-like structures with a diameter of 30-40 nm. Binds LGALS1 and LGALS3. Binds ITGB1, COL4A1, COL5A1, COL6A1, FN1 and NID. Interacts with the gamma-tubulin ring complex (gamma-TuRC), composed of gamma-tubulin, TUBGCP2, TUBGCP3, TUBGCP4, TUBGCP5 and TUBGCP6. The unglycosylated form interacts with PDE4DIP; this interaction, which is PDE4DIP isoform-specific, may connect a pericentrosomal complex, made of AKAP9, CDK5RAP2, EB1/MAPRE1 and PDE4DIP, to the gamma-tubulin ring complex (gamma-TuRC) to promote microtubule assembly and acetylation.

The protein resides in the secreted. Its subcellular location is the extracellular space. The protein localises to the extracellular matrix. Promotes integrin-mediated cell adhesion. May stimulate host defense against viruses and tumor cells. This is Galectin-3-binding protein (LGALS3BP) from Bos taurus (Bovine).